Reading from the N-terminus, the 340-residue chain is uncharacterized protein (340 aa).

The span at 193-207 (KELPKEKKKSDGDKT) shows a compositional bias: basic and acidic residues. The tract at residues 193-340 (KELPKEKKKS…FIPLQPKKKI (148 aa)) is disordered. Over residues 217 to 228 (FFGFWGHSGSKS) the composition is skewed to low complexity. A compositionally biased stretch (basic and acidic residues) spans 235 to 244 (EKPIEAKNEI). Polar residues-rich tracts occupy residues 263-279 (SDKN…SDQQ) and 307-328 (PAQS…SLTL).

This is an uncharacterized protein from Saccharomyces cerevisiae (strain ATCC 204508 / S288c) (Baker's yeast).